Consider the following 736-residue polypeptide: Replication restart protein PriA (736 aa).

Residues 230-396 (DFKGNISKEN…KEGRIRTFNF (167 aa)) enclose the Helicase ATP-binding domain. ATP is bound at residue 243–250 (GPTGSGKT). A DEAH box motif is present at residues 339 to 342 (DEEH). Zn(2+)-binding residues include cysteine 452, cysteine 455, cysteine 461, cysteine 464, cysteine 479, cysteine 482, cysteine 492, and cysteine 495. In terms of domain architecture, Helicase C-terminal spans 487 to 643 (GLVESCPRCG…EELERRKALG (157 aa)).

It belongs to the helicase family. PriA subfamily. As to quaternary structure, component of the replication restart primosome. It depends on Zn(2+) as a cofactor.

The catalysed reaction is Couples ATP hydrolysis with the unwinding of duplex DNA by translocating in the 3'-5' direction.. It carries out the reaction ATP + H2O = ADP + phosphate + H(+). Initiates the restart of stalled replication forks, which reloads the replicative helicase on sites other than the origin of replication. Recognizes and binds to abandoned replication forks and remodels them to uncover a helicase loading site. Promotes assembly of the primosome at these replication forks. This chain is Replication restart protein PriA, found in Thermotoga maritima (strain ATCC 43589 / DSM 3109 / JCM 10099 / NBRC 100826 / MSB8).